The primary structure comprises 793 residues: Spindle and centriole-associated protein 1 (793 aa).

The interval 1 to 29 is disordered; that stretch reads MSYLRASRTSSNLSLAKKPSKTRKKLQAR. Residues 18–27 are compositionally biased toward basic residues; the sequence is KPSKTRKKLQ. A coiled-coil region spans residues 312–405; the sequence is SLGLLNSMIM…LTAEILSLKE (94 aa). The segment at 519-542 is disordered; it reads KTVGNLSSHSAVPKRAANRLPSPP. The stretch at 622-712 forms a coiled coil; it reads LQNEDLVSQM…LLKLIEQQKQ (91 aa). Residues 718–739 are compositionally biased toward polar residues; it reads PTLSPITPQGRRTGSSLDTTPL. The interval 718–783 is disordered; it reads PTLSPITPQG…RSQAANDRGE (66 aa). Residues 740–753 are compositionally biased toward low complexity; sequence SSCSTSGRRSSGAS. The segment covering 754 to 778 has biased composition (polar residues); it reads NKSESISTSVGSLRSASTGRRSQAA.

Its subcellular location is the cytoplasm. It is found in the cytoskeleton. The protein localises to the microtubule organizing center. It localises to the centrosome. The protein resides in the centriole. Its subcellular location is the spindle. Functionally, regulator required for centriole duplication. In Xenopus laevis (African clawed frog), this protein is Spindle and centriole-associated protein 1 (spice1).